The chain runs to 334 residues: Glycerol-3-phosphate dehydrogenase [NAD(P)+] (334 aa).

3 residues coordinate NADPH: tryptophan 13, arginine 33, and lysine 106. Sn-glycerol 3-phosphate contacts are provided by lysine 106, glycine 137, and serine 139. Alanine 141 is an NADPH binding site. Sn-glycerol 3-phosphate-binding residues include lysine 192, aspartate 245, serine 255, arginine 256, and asparagine 257. Lysine 192 serves as the catalytic Proton acceptor. Residue arginine 256 participates in NADPH binding. Residues valine 280 and glutamate 282 each contribute to the NADPH site.

This sequence belongs to the NAD-dependent glycerol-3-phosphate dehydrogenase family.

The protein localises to the cytoplasm. It catalyses the reaction sn-glycerol 3-phosphate + NAD(+) = dihydroxyacetone phosphate + NADH + H(+). It carries out the reaction sn-glycerol 3-phosphate + NADP(+) = dihydroxyacetone phosphate + NADPH + H(+). It participates in membrane lipid metabolism; glycerophospholipid metabolism. Catalyzes the reduction of the glycolytic intermediate dihydroxyacetone phosphate (DHAP) to sn-glycerol 3-phosphate (G3P), the key precursor for phospholipid synthesis. This Chlamydia trachomatis serovar L2b (strain UCH-1/proctitis) protein is Glycerol-3-phosphate dehydrogenase [NAD(P)+].